Reading from the N-terminus, the 1292-residue chain is MVTPRLQTMAESSKFKKKVHFGETRSDRTKKLFRHYTVGSYDSFDASSDCIIEEKTVVLQKKDNEGFGFVLRGAKADTPIEEFNPTPAFPALQYLESVDEDGVAWQAGLRTGDFLTEVNNENVVKVGHRQVVNMIRHGGNHLVLKVVTVTRNLDPDDTARKKAPPPPKRAPTTALSLRSKSMTSELEELAVDIASVRRRKDVQVSDVECLKRRIVIRVALNKSEESGPISKPLRPLDNTPVNSRVATVKQRPTSRCFPAASDTNSMYDRQGIAVIPPTTPGSHQGPFLGIPRGTMRRQKSIDSRIPLSGITEEERQFLAPPMLKFTRSLSMPDASEDIPPPPATLPPSPPPPSPSSFNSPKSPAPRGYGTIKPAFTQNSGTKSPSPAVRSDNVGTIARDKSMYFRHEANRFSLDSEELYNSNMSTQQNFINKRSKMPENPYSEVGRLGNKGVYVPAKPVRRKGMLVKQSNVEDSPEKTCSIPIPTIIIKEPSTSSSGKSSQGSSMETDLQISEQVGQLRPDESLNVSGPFAAAIAGAVRDREKRLEARRNSPAFLSTDLGDECVGPKPSPRLQHSKSIDDGMFCSEEKAKHFMAPSSLIINRGSSNAFTNNDSSHQGDVSNARMSKIKGPENNAAPAKSTNASGNYMHPVTGKLLDPNSPLALALAARDRALKEQNQPSPSPTDPEKADLNKPLFIDTKLRSGMETINANRPNMRGMLKRQETESKHEPDSSKEEKRQGEKKNMLINIMDTSQQKTAGLLMVHTVDTTKADNVLTESEEAEKDPPPENSNSPVSEPREELENSIPKASECGTPAAPHIKAIVSVCSVEEPVILPFRIPPPPFASVDVDEDFVFTEPLPPPLEFANSFDIPEDASQIPPASLADLLIQRKNRAFPPPSFNPNIASNSIESKRLAALSNCLPTSFMQHPESFDNVTDSGIEEVDSRSGSDHHLETTSTISTVSSISTLSSEGGENLDTCTVYADGQAFLVDKPPVPPKPKVKPIINKSNALYKDAVLEENLDNFAVPLPAPPPLPLSIQPSMTKAGQQRTSKLWGDNTEVKSLVMPSPKANVISELNSILQQMNREKATKTGEGLDSPTGMKTASLSTRGTDALSTVSGNRNAAVTFTIRPGANQPISLQNRTPEFDSRVTGMRRAPSPVVVSPAEIIRDIKPGPLSAPPASMSDVFILPSQPPSGDMFGMSMGRSRSPSPSILQQPISNKPFSAKPIHMWTKQDVAEWLESLHLGEHREMFMDNEIDGTHLPNLQKEDLIDLGVTRVGHRMNIERALKQLLDR.

Residues 56–150 (TVVLQKKDNE…HLVLKVVTVT (95 aa)) enclose the PDZ domain. 7 disordered regions span residues 155–176 (PDDT…TALS), 331–393 (MPDA…SDNV), 488–508 (IKEP…METD), 604–656 (SSNA…KLLD), 671–743 (ALKE…EKKN), 774–811 (LTES…SECG), and 938–968 (IEEV…TLSS). The segment covering 338-354 (IPPPPATLPPSPPPPSP) has biased composition (pro residues). Over residues 355–365 (SSFNSPKSPAP) the composition is skewed to low complexity. A compositionally biased stretch (polar residues) spans 375–384 (FTQNSGTKSP). Residues 492–504 (STSSSGKSSQGSS) show a composition bias toward low complexity. Positions 604-623 (SSNAFTNNDSSHQGDVSNAR) are enriched in polar residues. Positions 719–743 (KRQETESKHEPDSSKEEKRQGEKKN) are enriched in basic and acidic residues. Basic and acidic residues predominate over residues 941–952 (VDSRSGSDHHLE). A compositionally biased stretch (low complexity) spans 953 to 968 (TTSTISTVSSISTLSS). Residues 991-997 (PPVPPKP) carry the SH3-binding motif. Residues 1087-1115 (TKTGEGLDSPTGMKTASLSTRGTDALSTV) form a disordered region. Polar residues predominate over residues 1098 to 1115 (GMKTASLSTRGTDALSTV). The SAM domain occupies 1229–1292 (WTKQDVAEWL…ERALKQLLDR (64 aa)).

The protein belongs to the SHANK family.

It localises to the cytoplasm. It is found in the synapse. The protein localises to the postsynaptic density. Its function is as follows. Seems to be an adapter protein in the postsynaptic density (PSD) of excitatory synapses that interconnects receptors of the postsynaptic membrane including NMDA-type and metabotropic glutamate receptors, and the actin-based cytoskeleton. May play a role in the structural and functional organization of the dendritic spine and synaptic junction. This Xenopus laevis (African clawed frog) protein is SH3 and multiple ankyrin repeat domains protein 2 (shank2).